A 219-amino-acid polypeptide reads, in one-letter code: Transmembrane emp24 domain-containing protein 10 (219 aa).

The N-terminal stretch at 1–31 (MSGWSGPLARRGPGPLALLFLFLLGPSSVLA) is a signal peptide. The tract at residues 1–142 (MSGWSGPLAR…KNYEEIAKVE (142 aa)) is required for interaction with STX17. Residues 32–185 (ISFHLPVNSR…RDTNESTNTR (154 aa)) are Lumenal-facing. The 153-residue stretch at 41-193 (RKCLREEIHK…TRVLYFSIFS (153 aa)) folds into the GOLD domain. The interval 147 to 178 (LEVELRRLEDLSESIVNDFAYMKKREEEMRDT) is required for TMED10 and TMED2 cis-Golgi network localization. Dimethylated arginine occurs at positions 171 and 176. An N-linked (GlcNAc...) asparagine glycan is attached at N179. The chain crosses the membrane as a helical span at residues 186 to 206 (VLYFSIFSMFCLIGLATWQVF). Residues 204-219 (QVFYLRRFFKAKKLIE) are interaction with COPG1. Residues 207-219 (YLRRFFKAKKLIE) are Cytoplasmic-facing. The interaction with ARF1 and IL1B stretch occupies residues 207 to 219 (YLRRFFKAKKLIE). The COPII vesicle coat-binding motif lies at 211–212 (FF). Residues 211 to 219 (FFKAKKLIE) carry the COPI vesicle coat-binding motif.

This sequence belongs to the EMP24/GP25L family. As to quaternary structure, predominantly dimeric and to a lesser extent monomeric in the ER. Monomer and dimer in ERGIC and cis-Golgi network. Forms homooligomer (via GOLD domain); the assembly is promoted by direct binding with leaderless cargos and may form a protein channel that facilitates cargo entry into the ERGIC. Forms heterooligomeric complexes with other members of the p24 family such as TMED2, TMED7 and TMED9. Interacts (via GOLD domain) with TMED2 (via GOLD domain); the complex is required for export of TMED10 from the ER to the cis-Golgi network; the complex is proposed to be involved in cis-Golgi network dynamics and / or biogenesis. Associates with the COPI vesicle coat subunits (coatomer). Tetramerization of the cytoplasmic domain at the Golgi membrane in vitro; the complex is proposed to interact with COPI coatomer and induce budding of the vesicles. Interacts with COPG1; the interaction involves TMED10 homodimer. Interacts with ARF1 (GDP-bound); the interaction probably involves a TMED10 oligomer. Interacts with SEC23A, SEC24B, SEC24C and SEC24D components of the coat protein complex II/COPII, indicative of an association of TMED10 with the COPII vesicle coat. Interacts with CD59. Interacts with MPPE1/PGAP5; the complex might recruit and sort GPI-anchored proteins to the ER-exit site, or the interaction might lead to recycling of PGAP5 between the ER and the Golgi. Interacts with F2LR1/PAR2. Interacts with KDELR2/ERD2; the interaction is disrupted by KDELR2 ligand. Found in a complex composed at least of SURF4, TMED2 and TMED10. Associates with the presenilin-dependent gamma-secretase complex. Interacts with STX17; the interaction is direct. Interacts with IL-1; the interaction is direct. Interacts with RAB21 (active GTP-bound form); the interaction is indirect and regulates TMED10 abundance and localization at the Golgi.

Its subcellular location is the endoplasmic reticulum membrane. It localises to the endoplasmic reticulum-Golgi intermediate compartment membrane. The protein resides in the golgi apparatus membrane. It is found in the golgi apparatus. The protein localises to the cis-Golgi network membrane. Its subcellular location is the trans-Golgi network membrane. It localises to the cytoplasmic vesicle. The protein resides in the secretory vesicle membrane. It is found in the cell membrane. The protein localises to the melanosome. In terms of biological role, cargo receptor involved in protein vesicular trafficking and quality control in the endoplasmic reticulum (ER) and Golgi. The p24 protein family is a group of transmembrane proteins that bind coat protein complex I/COPI and coat protein complex II/COPII involved in vesicular trafficking between the membranes. Acts at the lumenal side for incorporation of secretory cargo molecules into transport vesicles and involved in vesicle coat formation at the cytoplasmic side. Mainly functions in the early secretory pathway and cycles between the ER, ER-Golgi intermediate compartment (ERGIC) and Golgi, mediating cargo transport through COPI and COPII-coated vesicles. In COPII vesicle-mediated anterograde transport, involved in the transport of GPI-anchored proteins by acting together with TMED2 as their cargo receptor; the function specifically implies SEC24C and SEC24D of the COPII vesicle coat and lipid raft-like microdomains of the ER. Recognizes GPI anchors structural remodeled in the ER by the GPI inositol-deacylase/PGAP1 and the metallophosphoesterase MPPE1/PGAP5. In COPI vesicle-mediated retrograde transport, involved in the biogenesis of COPI vesicles and vesicle coat recruitment. Involved in trafficking of amyloid beta A4 protein and soluble APP-beta release (independent from the modulation of gamma-secretase activity). Involved in the KDELR2-mediated retrograde transport of the toxin A subunit (CTX-A-K63)together with COPI and the COOH terminus of KDELR2. On Golgi membranes, acts as a primary receptor for ARF1-GDP, a GTP-binding protein involved in COPI-vesicle formation. Increases coatomer-dependent GTPase-activating activity of ARFGAP2 which mediates the hydrolysis of ARF1-bound GTP and therefore modulates protein trafficking from the Golgi apparatus. Involved in the exocytic trafficking of G protein-coupled receptors F2LR1/PAR2 (trypsin and tryspin-like enzyme receptor), OPRM1 (opioid receptor) and P2RY4 (UTD and UDP receptor) from the Golgi to the plasma membrane, thus contributing to receptor resensitization. In addition to its cargo receptor activity, may also act as a protein channel after oligomerization, facilitating the post-translational entry of leaderless cytoplasmic cargo into the ERGIC. Involved in the translocation into ERGIC, the vesicle entry and the secretion of leaderless cargos (lacking the secretion signal sequence), including the mature form of interleukin 1/IL-1 family members, the alpha-crystallin B chain HSPB5, the carbohydrate-binding proteins galectin-1/LGALS1 and galectin-3/LGALS3, the microtubule-associated protein Tau/MAPT, and the annexin A1/ANXA1; the translocation process is dependent on cargo protein unfolding and enhanced by chaperones HSP90AB1 and HSP90B1/GRP9. Could also associates with the presenilin-dependent gamma-secretase complex in order to regulate gamma-cleavages of the amyloid beta A4 protein to yield amyloid-beta 40/Abeta40. The chain is Transmembrane emp24 domain-containing protein 10 (TMED10) from Oryctolagus cuniculus (Rabbit).